Here is a 428-residue protein sequence, read N- to C-terminus: C4-dicarboxylate transport protein (428 aa).

The next 8 helical transmembrane spans lie at 8–28 (VLYVQVIFAIVVGVLLGHLYP), 44–64 (LIKMVIGPIIFCTVVTGIAGM), 78–98 (LLYFEIVSTFALVLGLAATHI), 148–168 (GEILQILLIALLFGSVLAHLG), 184–204 (VLFGIVHIVTKLAPVGAFGAM), 222–242 (LIGTFYLTSVVFVLVVLGAIA), 307–327 (IYMTMAVLFIAQATNIELTWM), and 355–375 (AATLAVVPTIPLSGMVLILGI).

It belongs to the dicarboxylate/amino acid:cation symporter (DAACS) (TC 2.A.23) family.

Its subcellular location is the cell inner membrane. Responsible for the transport of dicarboxylates such as succinate, fumarate, and malate from the periplasm across the membrane. This Burkholderia thailandensis (strain ATCC 700388 / DSM 13276 / CCUG 48851 / CIP 106301 / E264) protein is C4-dicarboxylate transport protein.